Here is a 348-residue protein sequence, read N- to C-terminus: tRNA-specific 2-thiouridylase MnmA (348 aa).

ATP is bound by residues 8 to 15 (LLSGGVDS) and Met-34. Catalysis depends on Cys-105, which acts as the Nucleophile. A disulfide bond links Cys-105 and Cys-197. ATP is bound at residue Gly-129. The interval 147 to 149 (KDQ) is interaction with tRNA. The Cysteine persulfide intermediate role is filled by Cys-197.

The protein belongs to the MnmA/TRMU family.

The protein localises to the cytoplasm. It catalyses the reaction S-sulfanyl-L-cysteinyl-[protein] + uridine(34) in tRNA + AH2 + ATP = 2-thiouridine(34) in tRNA + L-cysteinyl-[protein] + A + AMP + diphosphate + H(+). Its function is as follows. Catalyzes the 2-thiolation of uridine at the wobble position (U34) of tRNA, leading to the formation of s(2)U34. This is tRNA-specific 2-thiouridylase MnmA from Fervidobacterium nodosum (strain ATCC 35602 / DSM 5306 / Rt17-B1).